A 37-amino-acid chain; its full sequence is MSGIVKSIILSGPSGLGKTAIAKRLWEYIWICGVPYH.

The protein belongs to the poxviridae A56.5 protein family.

This is an uncharacterized protein from Vaccinia virus (strain Western Reserve) (VACV).